We begin with the raw amino-acid sequence, 143 residues long: Ribosome-binding factor A (143 aa).

The interval 117 to 143 (DAEIARRSQGAMPAGEADPYRHSDEEE) is disordered. Residues 134–143 (DPYRHSDEEE) are compositionally biased toward basic and acidic residues.

This sequence belongs to the RbfA family. As to quaternary structure, monomer. Binds 30S ribosomal subunits, but not 50S ribosomal subunits or 70S ribosomes.

The protein resides in the cytoplasm. In terms of biological role, one of several proteins that assist in the late maturation steps of the functional core of the 30S ribosomal subunit. Associates with free 30S ribosomal subunits (but not with 30S subunits that are part of 70S ribosomes or polysomes). Required for efficient processing of 16S rRNA. May interact with the 5'-terminal helix region of 16S rRNA. This is Ribosome-binding factor A from Cutibacterium acnes (strain DSM 16379 / KPA171202) (Propionibacterium acnes).